The sequence spans 324 residues: Serpentine receptor class gamma-10 (324 aa).

Transmembrane regions (helical) follow at residues Ser-39–Gly-59, Met-69–Gly-89, Ile-91–Ile-111, Thr-128–Met-146, Ile-155–Leu-175, Leu-206–Gly-226, Met-246–Ala-266, and Ile-279–Ser-299.

This sequence belongs to the nematode receptor-like protein srg family.

Its subcellular location is the membrane. This is Serpentine receptor class gamma-10 (srg-10) from Caenorhabditis elegans.